The chain runs to 122 residues: Vacuolar transporter chaperone complex subunit 1 (122 aa).

Topologically, residues 1–32 (MSTQPLLQTTPGKRIALPVRVEPKVFFANERT) are cytoplasmic. A helical membrane pass occupies residues 33–53 (FLSWLSFAVVLGGLSVGLLNF). Residues 54–59 (GDRIGK) are Vacuolar-facing. The helical transmembrane segment at 60 to 80 (ISAGLFTIVAIGTMGYALGIY) threads the bilayer. Topologically, residues 81–101 (HWRASAIRRRGSGPYDDRLGP) are cytoplasmic. A helical membrane pass occupies residues 102-122 (TILCFVLLAAIITNFVLRMLF).

This sequence belongs to the VTC1 family. The VTC core complex is an integral membrane heterooligomer composed of at least the catalytic subunit vtc4 and the accessory subunits vtc1 and vtc2. vtc1 is a small membrane protein without hydrophilic domain. Vtc2 and vtc4 are related and have 2 hydrophilic domains that face the cytosol, an N-terminal SPX domain and the central core domain. The central core in vtc4 is the catalytic domain. Vtc1 interacts with GTP-bound Ras-like cdc42, which is subsequently inactivated.

The protein localises to the vacuole membrane. Its function is as follows. Accessory subunit of the vacuolar transporter chaperone (VTC) complex. The VTC complex acts as a vacuolar polyphosphate polymerase that catalyzes the synthesis of inorganic polyphosphate (polyP) via transfer of phosphate from ATP to a growing polyP chain, releasing ADP. VTC exposes its catalytic domain vtc4 to the cytosol, where the growing polyP chain winds through a tunnel-shaped pocket, integrating cytoplasmic polymer synthesis with polyP membrane translocation. The VTC complex carries 9 vacuolar transmembrane domains, which are likely to constitute the translocation channel into the organelle lumen. PolyP synthesis is tightly coupled to its transport into the vacuole lumen, in order to avoid otherwise toxic intermediates in the cytosol, and it depends on the proton gradient across the membrane, formed by V-ATPase. Vtc1 contributes only 3 transmembrane domains to the complex. The VTC complex also plays a role in vacuolar membrane fusion. Involved in the control of cell polarity. The polypeptide is Vacuolar transporter chaperone complex subunit 1 (Schizosaccharomyces pombe (strain 972 / ATCC 24843) (Fission yeast)).